The primary structure comprises 541 residues: Glucose-6-phosphate isomerase (541 aa).

Glu-346 functions as the Proton donor in the catalytic mechanism. Catalysis depends on residues His-377 and Lys-506.

The protein belongs to the GPI family.

It localises to the cytoplasm. It carries out the reaction alpha-D-glucose 6-phosphate = beta-D-fructose 6-phosphate. It functions in the pathway carbohydrate biosynthesis; gluconeogenesis. The protein operates within carbohydrate degradation; glycolysis; D-glyceraldehyde 3-phosphate and glycerone phosphate from D-glucose: step 2/4. Its function is as follows. Catalyzes the reversible isomerization of glucose-6-phosphate to fructose-6-phosphate. The chain is Glucose-6-phosphate isomerase from Rhizobium etli (strain ATCC 51251 / DSM 11541 / JCM 21823 / NBRC 15573 / CFN 42).